A 402-amino-acid chain; its full sequence is NADH-quinone oxidoreductase subunit D (402 aa).

This sequence belongs to the complex I 49 kDa subunit family. In terms of assembly, NDH-1 is composed of 14 different subunits. Subunits NuoB, C, D, E, F, and G constitute the peripheral sector of the complex.

It is found in the cell inner membrane. It catalyses the reaction a quinone + NADH + 5 H(+)(in) = a quinol + NAD(+) + 4 H(+)(out). NDH-1 shuttles electrons from NADH, via FMN and iron-sulfur (Fe-S) centers, to quinones in the respiratory chain. The immediate electron acceptor for the enzyme in this species is believed to be ubiquinone. Couples the redox reaction to proton translocation (for every two electrons transferred, four hydrogen ions are translocated across the cytoplasmic membrane), and thus conserves the redox energy in a proton gradient. The sequence is that of NADH-quinone oxidoreductase subunit D from Protochlamydia amoebophila (strain UWE25).